A 429-amino-acid chain; its full sequence is Light-independent protochlorophyllide reductase subunit N (429 aa).

Positions 32, 57, and 118 each coordinate [4Fe-4S] cluster.

The protein belongs to the BchN/ChlN family. In terms of assembly, protochlorophyllide reductase is composed of three subunits; BchL, BchN and BchB. Forms a heterotetramer of two BchB and two BchN subunits. [4Fe-4S] cluster is required as a cofactor.

The catalysed reaction is chlorophyllide a + oxidized 2[4Fe-4S]-[ferredoxin] + 2 ADP + 2 phosphate = protochlorophyllide a + reduced 2[4Fe-4S]-[ferredoxin] + 2 ATP + 2 H2O. The protein operates within porphyrin-containing compound metabolism; bacteriochlorophyll biosynthesis (light-independent). In terms of biological role, component of the dark-operative protochlorophyllide reductase (DPOR) that uses Mg-ATP and reduced ferredoxin to reduce ring D of protochlorophyllide (Pchlide) to form chlorophyllide a (Chlide). This reaction is light-independent. The NB-protein (BchN-BchB) is the catalytic component of the complex. The polypeptide is Light-independent protochlorophyllide reductase subunit N (Rhodopseudomonas palustris (strain ATCC BAA-98 / CGA009)).